The sequence spans 676 residues: Double-stranded RNA-specific editase Adar (676 aa).

The interval 1–51 (MKFDSRVMLNSANNNSPQHPVSAPSDINMNGYNRKLPQKRGYEMPKYSDPK) is disordered. The span at 8 to 31 (MLNSANNNSPQHPVSAPSDINMNG) shows a compositional bias: polar residues. A compositionally biased stretch (basic and acidic residues) spans 40 to 51 (RGYEMPKYSDPK). DRBM domains follow at residues 61 to 127 (QPKN…SFIQ) and 197 to 272 (ITVD…SLCN). Positions 348 to 672 (SVSTGTKCVS…LKKPIEQDEF (325 aa)) constitute an A to I editase domain. Residue His-372 participates in Zn(2+) binding. Residue Glu-374 is the Proton donor of the active site. Zn(2+)-binding residues include Cys-430 and Cys-493.

In terms of tissue distribution, expressed in embryonic nervous system; late stage 13 sees ventral nerve cord expression which spreads to brain by stage 16. Expression is maintained through to adulthood.

Its function is as follows. Has A-to-I RNA editing activity on extended dsRNA: edits RNA-binding protein Rnp4F. A-to-I editing of pre-mRNAs acts predominantly through nervous system targets to affect adult nervous system integrity, function and behavior. Essential for adaptation to environmental stresses, such as oxygen deprivation, and for the prevention of premature neuronal degeneration, through the editing of ion channels as targets. The chain is Double-stranded RNA-specific editase Adar from Drosophila melanogaster (Fruit fly).